The following is a 257-amino-acid chain: Thiazole synthase (257 aa).

Lysine 99 serves as the catalytic Schiff-base intermediate with DXP. 1-deoxy-D-xylulose 5-phosphate is bound by residues glycine 160, 186 to 187, and 208 to 209; these read AG and NT.

It belongs to the ThiG family. As to quaternary structure, homotetramer. Forms heterodimers with either ThiH or ThiS.

The protein resides in the cytoplasm. It catalyses the reaction [ThiS sulfur-carrier protein]-C-terminal-Gly-aminoethanethioate + 2-iminoacetate + 1-deoxy-D-xylulose 5-phosphate = [ThiS sulfur-carrier protein]-C-terminal Gly-Gly + 2-[(2R,5Z)-2-carboxy-4-methylthiazol-5(2H)-ylidene]ethyl phosphate + 2 H2O + H(+). It participates in cofactor biosynthesis; thiamine diphosphate biosynthesis. Functionally, catalyzes the rearrangement of 1-deoxy-D-xylulose 5-phosphate (DXP) to produce the thiazole phosphate moiety of thiamine. Sulfur is provided by the thiocarboxylate moiety of the carrier protein ThiS. In vitro, sulfur can be provided by H(2)S. The sequence is that of Thiazole synthase from Thermodesulfovibrio yellowstonii (strain ATCC 51303 / DSM 11347 / YP87).